The primary structure comprises 273 residues: WIMGHMVNAIAQIDEFVNLGANSIETDVSFDKNANPEYTYHGIPCDCGRTCTKSEKFNVFLQGLQKATTPGDSKYQEKLVLVVFDLKSSSLYDNQASDAGKKLAKSLLQNYWKNGNNGGRAYIVLSIPNLAHYKLITGFKETLKTEGHPELMEKVGYDFSGNDDIDQVAKAYKKAGVTGHVWQSDGITNCLPRGLDRVKQAVANRDSSNGFINKVYYWTVDKRSTTRGALDAGVDGIMTNYPDVIADVLSESAYKSKFRIATYEDNPWETFKN.

Histidine 5 is an active-site residue. Residues glutamate 25 and aspartate 27 each coordinate Mg(2+). Histidine 41 acts as the Nucleophile in catalysis. 2 cysteine pairs are disulfide-bonded: cysteine 45-cysteine 51 and cysteine 47-cysteine 190. Aspartate 85 provides a ligand contact to Mg(2+).

Belongs to the arthropod phospholipase D family. Class II subfamily. Requires Mg(2+) as cofactor. Expressed by the venom gland.

The protein resides in the secreted. It carries out the reaction an N-(acyl)-sphingosylphosphocholine = an N-(acyl)-sphingosyl-1,3-cyclic phosphate + choline. It catalyses the reaction an N-(acyl)-sphingosylphosphoethanolamine = an N-(acyl)-sphingosyl-1,3-cyclic phosphate + ethanolamine. The catalysed reaction is a 1-acyl-sn-glycero-3-phosphocholine = a 1-acyl-sn-glycero-2,3-cyclic phosphate + choline. The enzyme catalyses a 1-acyl-sn-glycero-3-phosphoethanolamine = a 1-acyl-sn-glycero-2,3-cyclic phosphate + ethanolamine. Functionally, dermonecrotic toxins cleave the phosphodiester linkage between the phosphate and headgroup of certain phospholipids (sphingolipid and lysolipid substrates), forming an alcohol (often choline) and a cyclic phosphate. This toxin acts on sphingomyelin (SM). It may also act on ceramide phosphoethanolamine (CPE), lysophosphatidylcholine (LPC) and lysophosphatidylethanolamine (LPE), but not on lysophosphatidylserine (LPS), and lysophosphatidylglycerol (LPG). It acts by transphosphatidylation, releasing exclusively cyclic phosphate products as second products. Induces dermonecrosis, hemolysis, increased vascular permeability, edema, inflammatory response, and platelet aggregation. In Loxosceles deserta (Desert recluse spider), this protein is Dermonecrotic toxin LdSicTox-alphaIB3aii.